Consider the following 706-residue polypeptide: Probable cyclic nucleotide-gated ion channel 3 (706 aa).

At 1–85 (MMNPQRNKFV…NDSYLQSWNK (85 aa)) the chain is on the cytoplasmic side. A helical membrane pass occupies residues 86–106 (IFLLLSVVALAFDPLFFYIPY). At 107-119 (VKPERFCLNLDKK) the chain is on the extracellular side. A helical membrane pass occupies residues 120-140 (LQTIACVFRTFIDAFYVVHML). Over 141–174 (FQFHTGFITPSSSGFGRGELNEKHKDIALRYLGS) the chain is Cytoplasmic. Residues 175-195 (YFLIDLLSILPIPQVVVLAIV) traverse the membrane as a helical segment. Topologically, residues 196–208 (PRMRRPASLVAKE) are extracellular. The chain crosses the membrane as a helical span at residues 209–229 (LLKWVIFCQYVPRIARIYPLF). The Cytoplasmic segment spans residues 230-247 (KEVTRTSGLVTETAWAGA). Residues 248-268 (ALNLFLYMLASHVFGSFWYLI) form a helical membrane-spanning segment. Residues 269 to 371 (SIERKDRCWR…QNLKTSAFEG (103 aa)) are Extracellular-facing. The helical transmembrane segment at 372 to 392 (EIIFAIVICISGLVLFALLIG) threads the bilayer. Over 393 to 706 (NMQKYLQSTT…ADPEFPMDET (314 aa)) the chain is Cytoplasmic. A nucleoside 3',5'-cyclic phosphate contacts are provided by residues 477–600 (WFQA…KQLR) and D548. The interval 591-606 (YRRLHSKQLRHMFRFY) is calmodulin-binding. The IQ domain maps to 611–640 (QTWAACFIQAAWKRHCRRKLSKALREEEGK).

The protein belongs to the cyclic nucleotide-gated cation channel (TC 1.A.1.5) family. In terms of assembly, homotetramer or heterotetramer.

Its subcellular location is the cell membrane. In terms of biological role, probable cyclic nucleotide-gated ion channel. The sequence is that of Probable cyclic nucleotide-gated ion channel 3 (CNGC3) from Arabidopsis thaliana (Mouse-ear cress).